Consider the following 462-residue polypeptide: Glycine--tRNA ligase (462 aa).

Residues Arg100 and Glu170 each coordinate substrate. Residues 202-204, 212-217, 287-288, and 331-334 each bind ATP; these read RNE, FRTREF, EL, and GVER. A substrate-binding site is contributed by 217–221; sequence FEQME. 327-331 contributes to the substrate binding site; the sequence is EPSVG.

This sequence belongs to the class-II aminoacyl-tRNA synthetase family. Homodimer.

The protein resides in the cytoplasm. The catalysed reaction is tRNA(Gly) + glycine + ATP = glycyl-tRNA(Gly) + AMP + diphosphate. Its function is as follows. Catalyzes the attachment of glycine to tRNA(Gly). This is Glycine--tRNA ligase from Malacoplasma penetrans (strain HF-2) (Mycoplasma penetrans).